The sequence spans 450 residues: Probable galactarate/D-glucarate transporter GudP (450 aa).

Residues 1 to 20 (MSSLSQAASSVEKRTNARYW) are Cytoplasmic-facing. A helical transmembrane segment spans residues 21-41 (IVVMLFIVTSFNYGDRATLSI). Topologically, residues 42-58 (AGSEMAKDIGLDPVGMG) are periplasmic. The helical transmembrane segment at 59–79 (YVFSAFSWAYVIGQIPGGWLL) threads the bilayer. The Cytoplasmic segment spans residues 80 to 85 (DRFGSK). Residues 86–105 (RVYFWSIFIWSMFTLLQGFV) traverse the membrane as a helical segment. Over 106–109 (DIFS) the chain is Periplasmic. The helical transmembrane segment at 110-132 (GFGIIVALFTLRFLVGLAEAPSF) threads the bilayer. Residues 133–153 (PGNSRIVAAWFPAQERGTAVS) lie on the Cytoplasmic side of the membrane. Residues 154 to 174 (IFNSAQYFATVIFAPIMGWLT) form a helical membrane-spanning segment. The Periplasmic segment spans residues 175–176 (HE). Residues 177 to 197 (VGWSHVFFFMGGLGIVISFIW) form a helical membrane-spanning segment. At 198 to 254 (LKVIHEPNQHPGVNKKELEYIAAGGALINMDQQNTKVKVPFSVKWGQIKQLLGSRMM) the chain is on the cytoplasmic side. The helical transmembrane segment at 255–275 (IGVYIGQYCINALTYFFITWF) threads the bilayer. The Periplasmic segment spans residues 276 to 290 (PVYLVQARGMSILKA). A helical membrane pass occupies residues 291-311 (GFVASVPAVCGFIGGVLGGII). The Cytoplasmic segment spans residues 312–329 (SDWLMRRTGSLNIARKTP). Residues 330–350 (IVMGMLLSMVMVFCNYVNVEW) traverse the membrane as a helical segment. A topological domain (periplasmic) is located at residue methionine 351. Residues 352 to 372 (IIGFMALAFFGKGIGALGWAV) form a helical membrane-spanning segment. Residues 373 to 387 (MADTAPKEISGLSGG) lie on the Cytoplasmic side of the membrane. Residues 388 to 408 (LFNMFGNISGIVTPIAIGYIV) traverse the membrane as a helical segment. The Periplasmic portion of the chain corresponds to 409-415 (GTTGSFN). Residues 416–436 (GALIYVGVHALIAVLSYLVLV) traverse the membrane as a helical segment. Topologically, residues 437 to 450 (GDIKRIELKPVAGQ) are cytoplasmic.

This sequence belongs to the major facilitator superfamily. Phthalate permease family.

It is found in the cell inner membrane. The catalysed reaction is galactarate(in) + H(+)(in) = galactarate(out) + H(+)(out). It catalyses the reaction D-glucarate(in) + H(+)(in) = D-glucarate(out) + H(+)(out). The enzyme catalyses (R)-glycerate(in) + H(+)(in) = (R)-glycerate(out) + H(+)(out). Probably involved in the uptake of galactarate and/or D-glucarate. May also transport D-glycerate. This chain is Probable galactarate/D-glucarate transporter GudP, found in Escherichia coli (strain K12).